The primary structure comprises 99 residues: Small ribosomal subunit protein bS20 (99 aa).

This sequence belongs to the bacterial ribosomal protein bS20 family.

Its function is as follows. Binds directly to 16S ribosomal RNA. The polypeptide is Small ribosomal subunit protein bS20 (Chlamydia pneumoniae (Chlamydophila pneumoniae)).